Here is a 458-residue protein sequence, read N- to C-terminus: tRNA modification GTPase MnmE (458 aa).

Residues Arg22, Glu84, and Arg123 each contribute to the (6S)-5-formyl-5,6,7,8-tetrahydrofolate site. The TrmE-type G domain maps to 220–379 (GIATAIIGRP…LEKAIADLFF (160 aa)). Asn230 serves as a coordination point for K(+). GTP contacts are provided by residues 230–235 (NVGKSS), 249–255 (TDIAGTT), and 274–277 (DTAG). Mg(2+) is bound at residue Ser234. The K(+) site is built by Thr249, Ile251, and Thr254. A Mg(2+)-binding site is contributed by Thr255. A (6S)-5-formyl-5,6,7,8-tetrahydrofolate-binding site is contributed by Lys458.

It belongs to the TRAFAC class TrmE-Era-EngA-EngB-Septin-like GTPase superfamily. TrmE GTPase family. In terms of assembly, homodimer. Heterotetramer of two MnmE and two MnmG subunits. Requires K(+) as cofactor.

It is found in the cytoplasm. Exhibits a very high intrinsic GTPase hydrolysis rate. Involved in the addition of a carboxymethylaminomethyl (cmnm) group at the wobble position (U34) of certain tRNAs, forming tRNA-cmnm(5)s(2)U34. The chain is tRNA modification GTPase MnmE from Bacillus cytotoxicus (strain DSM 22905 / CIP 110041 / 391-98 / NVH 391-98).